Consider the following 221-residue polypeptide: Large ribosomal subunit protein uL3 (221 aa).

It belongs to the universal ribosomal protein uL3 family. Part of the 50S ribosomal subunit. Forms a cluster with proteins L14 and L19.

Its function is as follows. One of the primary rRNA binding proteins, it binds directly near the 3'-end of the 23S rRNA, where it nucleates assembly of the 50S subunit. This is Large ribosomal subunit protein uL3 from Nocardia farcinica (strain IFM 10152).